The following is a 361-amino-acid chain: Serine/threonine-protein kinase SRK2B (361 aa).

Residues 4-260 (YELVKDIGAG…IGDIKKHPWF (257 aa)) form the Protein kinase domain. ATP-binding positions include 10–18 (IGAGNFGVA) and Lys33. Asp123 (proton acceptor) is an active-site residue. At Ser154 the chain carries Phosphoserine. Positions 311–361 (AFGWGGGEDAEGKEEDAEEEVEEVEEEEDEEDEYDKTVKQVHASMGEVRVS) are disordered. The span at 318–344 (EDAEGKEEDAEEEVEEVEEEEDEEDEY) shows a compositional bias: acidic residues.

The protein belongs to the protein kinase superfamily. Ser/Thr protein kinase family. In terms of tissue distribution, expressed in seedlings.

It carries out the reaction L-seryl-[protein] + ATP = O-phospho-L-seryl-[protein] + ADP + H(+). The catalysed reaction is L-threonyl-[protein] + ATP = O-phospho-L-threonyl-[protein] + ADP + H(+). The protein is Serine/threonine-protein kinase SRK2B (SRK2B) of Arabidopsis thaliana (Mouse-ear cress).